Here is a 100-residue protein sequence, read N- to C-terminus: NADH-quinone oxidoreductase subunit K (100 aa).

3 consecutive transmembrane segments (helical) span residues 4-24 (LFHG…SLIV), 28-48 (ILFM…ALVV), and 60-80 (IMYI…LALL).

Belongs to the complex I subunit 4L family. As to quaternary structure, NDH-1 is composed of 13 different subunits. Subunits NuoA, H, J, K, L, M, N constitute the membrane sector of the complex.

It localises to the cell membrane. It catalyses the reaction a quinone + NADH + 5 H(+)(in) = a quinol + NAD(+) + 4 H(+)(out). NDH-1 shuttles electrons from NADH, via FMN and iron-sulfur (Fe-S) centers, to quinones in the respiratory chain. The immediate electron acceptor for the enzyme in this species is believed to be ubiquinone. Couples the redox reaction to proton translocation (for every two electrons transferred, four hydrogen ions are translocated across the cytoplasmic membrane), and thus conserves the redox energy in a proton gradient. The protein is NADH-quinone oxidoreductase subunit K of Buchnera aphidicola subsp. Schizaphis graminum (strain Sg).